Here is a 365-residue protein sequence, read N- to C-terminus: Cobalt-precorrin-5B C(1)-methyltransferase (365 aa).

Belongs to the CbiD family.

The catalysed reaction is Co-precorrin-5B + S-adenosyl-L-methionine = Co-precorrin-6A + S-adenosyl-L-homocysteine. The protein operates within cofactor biosynthesis; adenosylcobalamin biosynthesis; cob(II)yrinate a,c-diamide from sirohydrochlorin (anaerobic route): step 6/10. In terms of biological role, catalyzes the methylation of C-1 in cobalt-precorrin-5B to form cobalt-precorrin-6A. This is Cobalt-precorrin-5B C(1)-methyltransferase from Polaromonas naphthalenivorans (strain CJ2).